The following is a 675-amino-acid chain: Pescadillo homolog (675 aa).

Residues 308–317 (AGLDEAKEEP) are compositionally biased toward basic and acidic residues. Residues 308–330 (AGLDEAKEEPAAETTEESSETID) are disordered. In terms of domain architecture, BRCT spans 351–470 (EAGSLFAPFT…KLVRPDLYAP (120 aa)). The tract at residues 474 to 675 (LPPHLSPWVK…RRKLEKEATK (202 aa)) is disordered. Acidic residues predominate over residues 497–517 (EQEEEGEAELDEDSDEEMEEA). Basic and acidic residues predominate over residues 518–529 (ANDKKAEAKADV). 2 stretches are compositionally biased toward acidic residues: residues 531-540 (SESEDEDESV) and 548-580 (GTDD…DEEE). Positions 567–675 (EEEEAASESE…RRKLEKEATK (109 aa)) form a coiled coil. Residues 581-591 (AARTQHQKELE) show a composition bias toward basic and acidic residues. Over residues 612–623 (KASQAKKIAAKK) the composition is skewed to basic residues. Basic and acidic residues predominate over residues 624–634 (RKEEEELERQK).

It belongs to the pescadillo family. Component of the NOP7 complex, composed of erb1, nop7 and ytm1. The complex is held together by erb1, which interacts with nop7 via its N-terminal domain and with ytm1 via a high-affinity interaction between the seven-bladed beta-propeller domains of the 2 proteins. The NOP7 complex associates with the 66S pre-ribosome.

The protein resides in the nucleus. It is found in the nucleolus. It localises to the nucleoplasm. Its function is as follows. Component of the NOP7 complex, which is required for maturation of the 25S and 5.8S ribosomal RNAs and formation of the 60S ribosome. The chain is Pescadillo homolog (nop7) from Neosartorya fischeri (strain ATCC 1020 / DSM 3700 / CBS 544.65 / FGSC A1164 / JCM 1740 / NRRL 181 / WB 181) (Aspergillus fischerianus).